A 185-amino-acid polypeptide reads, in one-letter code: Ribosome-recycling factor (185 aa).

This sequence belongs to the RRF family.

It is found in the cytoplasm. Functionally, responsible for the release of ribosomes from messenger RNA at the termination of protein biosynthesis. May increase the efficiency of translation by recycling ribosomes from one round of translation to another. In Mycobacterium leprae (strain Br4923), this protein is Ribosome-recycling factor.